The following is a 55-amino-acid chain: Large ribosomal subunit protein bL33B (55 aa).

The protein belongs to the bacterial ribosomal protein bL33 family.

In Mycolicibacterium paratuberculosis (strain ATCC BAA-968 / K-10) (Mycobacterium paratuberculosis), this protein is Large ribosomal subunit protein bL33B.